Reading from the N-terminus, the 307-residue chain is MKSKKGLTLTITLGTLALFLSGCVQTTKAGKPYGFVYEYLAKPGQNVMEWLSQLFGNNYGWAIIGLTVIVRLVLLPMMINQQRKSTYQQEKMSAVRPQMEKIQARQKAATTQEEKAAISNELMQLYRDNGISMTGGIGCLPLLIQLPIFSALYYAIRYSPELSKATFMGISLGKSSLILAILAFLSYLAQGYLSMIGLPEEQKKTMRLMLIMSPVMILFVSMSAPAGLGLYFFVGGLFACLQTLIINFFRPRIRREVEAELKKHPIKTPTPTQPKPINATESKPSHPRPQNNAGRGRNAGKQQRHHK.

An N-terminal signal peptide occupies residues 1–22 (MKSKKGLTLTITLGTLALFLSG). The N-palmitoyl cysteine moiety is linked to residue cysteine 23. Residue cysteine 23 is the site of S-diacylglycerol cysteine attachment. 5 consecutive transmembrane segments (helical) span residues 59-79 (YGWA…PMMI), 136-156 (GIGC…YYAI), 177-197 (LILA…SMIG), 205-225 (TMRL…MSAP), and 226-246 (AGLG…TLII). The tract at residues 260 to 307 (ELKKHPIKTPTPTQPKPINATESKPSHPRPQNNAGRGRNAGKQQRHHK) is disordered.

Belongs to the OXA1/ALB3/YidC family. Type 2 subfamily.

The protein resides in the cell membrane. Required for the insertion and/or proper folding and/or complex formation of integral membrane proteins into the membrane. Involved in integration of membrane proteins that insert both dependently and independently of the Sec translocase complex, as well as at least some lipoproteins. The chain is Membrane protein insertase YidC 1 from Lactiplantibacillus plantarum (strain ATCC BAA-793 / NCIMB 8826 / WCFS1) (Lactobacillus plantarum).